Consider the following 73-residue polypeptide: Translation initiation factor IF-1 (73 aa).

The 73-residue stretch at Met1–Lys73 folds into the S1-like domain.

The protein belongs to the IF-1 family. Component of the 30S ribosomal translation pre-initiation complex which assembles on the 30S ribosome in the order IF-2 and IF-3, IF-1 and N-formylmethionyl-tRNA(fMet); mRNA recruitment can occur at any time during PIC assembly.

The protein localises to the cytoplasm. In terms of biological role, one of the essential components for the initiation of protein synthesis. Stabilizes the binding of IF-2 and IF-3 on the 30S subunit to which N-formylmethionyl-tRNA(fMet) subsequently binds. Helps modulate mRNA selection, yielding the 30S pre-initiation complex (PIC). Upon addition of the 50S ribosomal subunit IF-1, IF-2 and IF-3 are released leaving the mature 70S translation initiation complex. This chain is Translation initiation factor IF-1, found in Kineococcus radiotolerans (strain ATCC BAA-149 / DSM 14245 / SRS30216).